We begin with the raw amino-acid sequence, 231 residues long: 2-C-methyl-D-erythritol 4-phosphate cytidylyltransferase (231 aa).

Belongs to the IspD/TarI cytidylyltransferase family. IspD subfamily.

It catalyses the reaction 2-C-methyl-D-erythritol 4-phosphate + CTP + H(+) = 4-CDP-2-C-methyl-D-erythritol + diphosphate. Its pathway is isoprenoid biosynthesis; isopentenyl diphosphate biosynthesis via DXP pathway; isopentenyl diphosphate from 1-deoxy-D-xylulose 5-phosphate: step 2/6. Its function is as follows. Catalyzes the formation of 4-diphosphocytidyl-2-C-methyl-D-erythritol from CTP and 2-C-methyl-D-erythritol 4-phosphate (MEP). The sequence is that of 2-C-methyl-D-erythritol 4-phosphate cytidylyltransferase from Dictyoglomus thermophilum (strain ATCC 35947 / DSM 3960 / H-6-12).